Reading from the N-terminus, the 871-residue chain is Protein translocase subunit SecA (871 aa).

ATP-binding positions include Gln80, 98-102, and Asp537; that span reads GEGKT.

Belongs to the SecA family. As to quaternary structure, monomer and homodimer. Part of the essential Sec protein translocation apparatus which comprises SecA, SecYEG and auxiliary proteins SecDF. Other proteins may also be involved. A single SecA monomer interacts with SecY in the channel.

The protein resides in the cell inner membrane. Its subcellular location is the cytoplasm. The catalysed reaction is ATP + H2O + cellular proteinSide 1 = ADP + phosphate + cellular proteinSide 2.. Its function is as follows. Part of the Sec protein translocase complex. Interacts with the SecYEG preprotein conducting channel. Has a central role in coupling the hydrolysis of ATP to the transfer of proteins into and across the cell membrane, serving as an ATP-driven molecular motor driving the stepwise translocation of polypeptide chains across the membrane. The polypeptide is Protein translocase subunit SecA (Thermotoga maritima (strain ATCC 43589 / DSM 3109 / JCM 10099 / NBRC 100826 / MSB8)).